The primary structure comprises 176 residues: Ribosome maturation factor RimM (176 aa).

The PRC barrel domain maps to 93-172 (EGEFFYFDVL…EILTKDAKSI (80 aa)).

The protein belongs to the RimM family. As to quaternary structure, binds ribosomal protein uS19.

It localises to the cytoplasm. Functionally, an accessory protein needed during the final step in the assembly of 30S ribosomal subunit, possibly for assembly of the head region. Essential for efficient processing of 16S rRNA. May be needed both before and after RbfA during the maturation of 16S rRNA. It has affinity for free ribosomal 30S subunits but not for 70S ribosomes. The chain is Ribosome maturation factor RimM from Campylobacter curvus (strain 525.92).